Reading from the N-terminus, the 281-residue chain is 2-dehydro-3-deoxyphosphooctonate aldolase (281 aa).

The protein belongs to the KdsA family.

It localises to the cytoplasm. It catalyses the reaction D-arabinose 5-phosphate + phosphoenolpyruvate + H2O = 3-deoxy-alpha-D-manno-2-octulosonate-8-phosphate + phosphate. Its pathway is carbohydrate biosynthesis; 3-deoxy-D-manno-octulosonate biosynthesis; 3-deoxy-D-manno-octulosonate from D-ribulose 5-phosphate: step 2/3. The protein operates within bacterial outer membrane biogenesis; lipopolysaccharide biosynthesis. In Ectopseudomonas mendocina (strain ymp) (Pseudomonas mendocina), this protein is 2-dehydro-3-deoxyphosphooctonate aldolase.